A 218-amino-acid polypeptide reads, in one-letter code: Mitochondrial fission factor (218 aa).

Residues 1–198 (MAEISRIQYE…ENKERAKREM (198 aa)) lie on the Cytoplasmic side of the membrane. The residue at position 89 (Thr89) is a Phosphothreonine. Residues Ser129, Ser131, Ser146, and Ser171 each carry the phosphoserine modification. Residues 167–198 (VDAASLRRQIIKLNRRLQLLEEENKERAKREM) adopt a coiled-coil conformation. A helical; Anchor for type IV membrane protein transmembrane segment spans residues 199 to 216 (VMYSITVAFWLLNSWLWF). Residues 217-218 (RR) are Mitochondrial intermembrane-facing.

It belongs to the Tango11 family. Homodimer. Interacts with DNM1L. Interacts with C11orf65/MFI; the interaction inhibits MFF interaction with DNM1L.

It localises to the mitochondrion outer membrane. The protein resides in the peroxisome. It is found in the cytoplasmic vesicle. The protein localises to the secretory vesicle. Its subcellular location is the synaptic vesicle. Plays a role in mitochondrial and peroxisomal fission. Promotes the recruitment and association of the fission mediator dynamin-related protein 1 (DNM1L) to the mitochondrial surface. May be involved in regulation of synaptic vesicle membrane dynamics by recruitment of DNM1L to clathrin-containing vesicles. This is Mitochondrial fission factor (MFF) from Bos taurus (Bovine).